A 931-amino-acid polypeptide reads, in one-letter code: Protein translocase subunit SecA (931 aa).

Residues Gln87, 105-109, and Asp515 contribute to the ATP site; that span reads GEGKT. Cys915, Cys917, Cys926, and His927 together coordinate Zn(2+).

It belongs to the SecA family. In terms of assembly, monomer and homodimer. Part of the essential Sec protein translocation apparatus which comprises SecA, SecYEG and auxiliary proteins SecDF-YajC and YidC. Requires Zn(2+) as cofactor.

It localises to the cell inner membrane. It is found in the cytoplasm. The catalysed reaction is ATP + H2O + cellular proteinSide 1 = ADP + phosphate + cellular proteinSide 2.. Part of the Sec protein translocase complex. Interacts with the SecYEG preprotein conducting channel. Has a central role in coupling the hydrolysis of ATP to the transfer of proteins into and across the cell membrane, serving both as a receptor for the preprotein-SecB complex and as an ATP-driven molecular motor driving the stepwise translocation of polypeptide chains across the membrane. The protein is Protein translocase subunit SecA of Burkholderia ambifaria (strain MC40-6).